Consider the following 91-residue polypeptide: Small ribosomal subunit protein bS18 (91 aa).

Belongs to the bacterial ribosomal protein bS18 family. In terms of assembly, part of the 30S ribosomal subunit. Forms a tight heterodimer with protein bS6.

Binds as a heterodimer with protein bS6 to the central domain of the 16S rRNA, where it helps stabilize the platform of the 30S subunit. The chain is Small ribosomal subunit protein bS18 from Thiobacillus denitrificans (strain ATCC 25259 / T1).